The sequence spans 6753 residues: Putative histone-lysine N-methyltransferase 1 (6753 aa).

6 disordered regions span residues 1 to 28, 418 to 458, 470 to 522, 736 to 1024, 1487 to 1545, and 1557 to 1642; these read MSEN…CKKE, FGNM…GKKN, DTTL…CNPS, DDDE…KKDK, FNNN…NTAT, and YKKV…GKSK. The span at 435–449 shows a compositional bias: low complexity; that stretch reads NNTSKNNISNNNNNM. Residues 475-502 show a composition bias toward basic and acidic residues; that stretch reads QAKKESIKTVSKNERKNNMNKHSHDNKV. Over residues 504–516 the composition is skewed to basic residues; that stretch reads KLNKRMSNKRRNN. Residues 739-794 are compositionally biased toward basic and acidic residues; that stretch reads ECKKENKDNISESSKRSNNIGEKKMLHVEKSEEHDDMTSDSNKEDTKIEEGRKKSN. Positions 798–808 are enriched in acidic residues; the sequence is IDVDDGEEEEN. Positions 809–833 are enriched in low complexity; that stretch reads VNNNDNNNDNNNDNDNSSDNNNNDD. Composition is skewed to basic and acidic residues over residues 853-866 and 885-900; these read EKKD…DKNL and IKKD…KKNI. A compositionally biased stretch (low complexity) spans 912 to 932; sequence RSNSSSTSTSNSSSKSKSSNC. 2 stretches are compositionally biased toward basic and acidic residues: residues 945–955 and 964–975; these read KMDEKNSEQKK and TCNEGKSKKDST. Basic residues-rich tracts occupy residues 1002 to 1019 and 1492 to 1506; these read EKKK…RKGI and KNKR…KNTI. The span at 1522 to 1533 shows a compositional bias: low complexity; sequence SNSHSIEVSSSE. Basic and acidic residues predominate over residues 1566–1599; that stretch reads KNGENKNGENKNGDIKNDDIKNDDIKNDDIRNDD. The segment covering 1615–1632 has biased composition (low complexity); the sequence is ESNNIDNNNSSNDSLSDV. 3 PHD-type zinc fingers span residues 1671 to 1728, 1761 to 1819, and 2510 to 2579; these read CYRC…CLKC, KNFC…CSIG, and KECC…CIKC. The segment at 1764–1817 adopts an RING-type; degenerate zinc-finger fold; the sequence is CIMCNEKYDEDDSKKWVQCDVCKFWIHLSCDKNESRNIETLSNKNIDYKCPTCS. Positions 1816–1919 constitute a Bromo domain; that stretch reads CSIGTFHDKI…KKGRVIIKNM (104 aa). Residues 2694-2705 are compositionally biased toward basic and acidic residues; that stretch reads ECNKNEKKKNDN. Disordered regions lie at residues 2694–2768, 3053–3072, 4182–4254, 4295–4349, and 5331–5460; these read ECNK…KDTK, EMES…CNNN, NEQN…LKTT, ENDE…ENEK, and NMNM…NNDK. Residues 2720–2735 are compositionally biased toward low complexity; that stretch reads NNNNNNNGDDNNNIDN. Residues 2758-2768 show a composition bias toward basic and acidic residues; sequence NEEKKNNKDTK. Residues 3057-3072 show a composition bias toward low complexity; that stretch reads NNNNNNNNNNSDCNNN. 3 stretches are compositionally biased toward basic and acidic residues: residues 4212-4223, 4239-4254, and 4297-4321; these read SKKDMLIKKEMN, SPKK…LKTT, and DENK…EKKK. Basic residues predominate over residues 4322-4338; it reads KENKKGREKSVKVRKTK. 2 stretches are compositionally biased toward low complexity: residues 5331–5340 and 5348–5400; these read NMNMLDNNMN and ENNN…NNNN. Basic residues predominate over residues 5401 to 5411; the sequence is KSKKNTQKKKD. Positions 5416 to 5426 are enriched in low complexity; it reads VKINQNNSNNK. Residues 5434–5460 show a composition bias toward basic and acidic residues; that stretch reads SKDNEELKSDNTKNNKTKDSDGNNNDK. The C2HC pre-PHD-type; degenerate zinc-finger motif lies at 5496 to 5532; sequence YMKEKKCKNKEKNRGSKNNNIKNIKLIDMCEWKEDRN. Residues 5558–5610 form a PHD-type 4; degenerate zinc finger; the sequence is STCFLCGYNNASVYCSNEDCNVKFHLNCAFYSTVIKDPSNNPFFRYLKCFNLV. A compositionally biased stretch (low complexity) spans 5905 to 5952; the sequence is NDNNNDINNNDNNNNENNNENINDNNNNNNNNNNNNNNNNSNNNNNNN. Disordered regions lie at residues 5905 to 5958, 6103 to 6133, and 6212 to 6235; these read NDNN…YYHN, DCSN…PEHI, and KFSD…KNQT. The segment covering 6118 to 6133 has biased composition (basic and acidic residues); the sequence is ENRKNENDDDNIPEHI. The 118-residue stretch at 6612 to 6729 folds into the SET domain; that stretch reads LRLYVKKSSI…AHEEITYDYQ (118 aa). Positions 6737-6753 constitute a Post-SET domain; it reads KKLICLCGSSTCLGRMN.

This sequence belongs to the class V-like SAM-binding methyltransferase superfamily.

It catalyses the reaction L-lysyl-[histone] + S-adenosyl-L-methionine = N(6)-methyl-L-lysyl-[histone] + S-adenosyl-L-homocysteine + H(+). Its function is as follows. Probable histone methyltransferase. The sequence is that of Putative histone-lysine N-methyltransferase 1 (SET1) from Plasmodium falciparum (isolate 3D7).